The primary structure comprises 600 residues: Intraflagellar transport protein 74 homolog (600 aa).

Residues 1-33 are disordered; that stretch reads MASNHKSSAARPVSRGGVGLTGRPPSGIRPLSG. The interval 1–90 is basic region; sequence MASNHKSSAA…KTGTKGPQRQ (90 aa). Arg-51 bears the Omega-N-methylarginine mark. Thr-73 carries the phosphothreonine modification. A coiled-coil region spans residues 98–482; sequence LGLLRSKISE…KIKQMTTDLE (385 aa). The segment at 561–600 is important for interaction with IFT27; sequence EFIATKSQESDYQPIKKNVTKQIAEYNKTIVDALHSTSGN.

This sequence belongs to the IFT74 family. Component of the IFT complex B, at least composed of IFT20, IFT22, IFT25, IFT27, IFT46, IFT52, TRAF3IP1/IFT54, IFT57, IFT74, IFT80, IFT81, and IFT88. Interacts with IFT81; the interaction is direct. Within the IFT complex B, IFT74 and IFT81 mediate the transport of tubulin within the cilium. Interacts (via basic region) with beta-tubulin (via acidic region); interaction is direct. Interacts with ARL13B and IFT88. Interacts (via the IFT74/IFT81 heterodimer) with RABL2B. Interacts with IFT57 and IFT70B. As to expression, highly expressed in adult and fetal kidney and expressed at lower level in adult heart, placenta, lung, liver and pancreas, and in fetal heart, lung and liver. Little to no expression was detected in adult brain and skeletal muscle or in fetal brain, thymus and spleen. Detected in sperm (at protein level).

It localises to the cell projection. It is found in the cilium. The protein resides in the cytoplasmic vesicle. Its subcellular location is the flagellum. The protein localises to the secretory vesicle. It localises to the acrosome. In terms of biological role, component of the intraflagellar transport (IFT) complex B: together with IFT81, forms a tubulin-binding module that specifically mediates transport of tubulin within the cilium. Binds beta-tubulin via its basic region. Required for ciliogenesis. Essential for flagellogenesis during spermatogenesis. In Homo sapiens (Human), this protein is Intraflagellar transport protein 74 homolog (IFT74).